Here is a 267-residue protein sequence, read N- to C-terminus: Tryptophan synthase alpha chain (267 aa).

Active-site proton acceptor residues include glutamate 47 and aspartate 58.

Belongs to the TrpA family. Tetramer of two alpha and two beta chains.

It carries out the reaction (1S,2R)-1-C-(indol-3-yl)glycerol 3-phosphate + L-serine = D-glyceraldehyde 3-phosphate + L-tryptophan + H2O. It functions in the pathway amino-acid biosynthesis; L-tryptophan biosynthesis; L-tryptophan from chorismate: step 5/5. In terms of biological role, the alpha subunit is responsible for the aldol cleavage of indoleglycerol phosphate to indole and glyceraldehyde 3-phosphate. The chain is Tryptophan synthase alpha chain from Chlorobaculum parvum (strain DSM 263 / NCIMB 8327) (Chlorobium vibrioforme subsp. thiosulfatophilum).